The following is a 639-amino-acid chain: Polyvinylalcohol dehydrogenase (639 aa).

Residues 1 to 33 form the signal peptide; sequence MQQNIERNQVSMTTSRFVWGAVMALVALGSASA. The region spanning 36-152 is the Cytochrome c domain; the sequence is LNLPDGAALY…TPDQWNGWGA (117 aa). Heme is bound by residues Cys49, Cys52, and His53.

It belongs to the bacterial PQQ dehydrogenase family. In terms of assembly, monomer. Pyrroloquinoline quinone is required as a cofactor.

It is found in the cytoplasm. The catalysed reaction is a polyvinyl alcohol + 2n Fe(III)-[cytochrome c] = an oxidized polyvinyl alcohol + 2n Fe(II)-[cytochrome c] + 2n H(+). Its function is as follows. Catalyzes the oxidation of polyvinyl alcohol (PVA) in the polyvinyl alcohol degradation pathway. This is Polyvinylalcohol dehydrogenase (pvaA) from Pseudomonas sp.